The primary structure comprises 255 residues: F-box/SPRY domain-containing protein 1 (255 aa).

Residues 3-51 form the F-box domain; it reads DRVAALCNYNVLEVVFSYLDLNDLGRCSQVCKSWFHFLNDENSDVWRFH. The 193-residue stretch at 61–253 folds into the B30.2/SPRY domain; it reads TKSELLSPVP…VSMVYCGTPL (193 aa).

This sequence belongs to the FBXO45/Fsn family. Component of an E3 ubiquitin ligase complex composed of hiw and Fsn.

The protein resides in the synapse. The protein operates within protein modification; protein ubiquitination. Functionally, required in the presynaptic motoneuron to down-regulate the levels of wnd and restrain synaptic terminal growth at the neuromuscular junction (NMJ). The protein is F-box/SPRY domain-containing protein 1 of Drosophila persimilis (Fruit fly).